The sequence spans 409 residues: Tyrosine--tRNA ligase (409 aa).

Residues 54-63 carry the 'HIGH' region motif; it reads PTAPDIHLGH. The short motif at 238–242 is the 'KMSKS' region element; it reads KMSKS. Residue Lys241 participates in ATP binding. Residues 347–407 form the S4 RNA-binding domain; the sequence is QGILRILREA…GKRKFARVKL (61 aa).

This sequence belongs to the class-I aminoacyl-tRNA synthetase family. TyrS type 2 subfamily. Homodimer.

It is found in the cytoplasm. It catalyses the reaction tRNA(Tyr) + L-tyrosine + ATP = L-tyrosyl-tRNA(Tyr) + AMP + diphosphate + H(+). Its function is as follows. Catalyzes the attachment of tyrosine to tRNA(Tyr) in a two-step reaction: tyrosine is first activated by ATP to form Tyr-AMP and then transferred to the acceptor end of tRNA(Tyr). This Bordetella pertussis (strain Tohama I / ATCC BAA-589 / NCTC 13251) protein is Tyrosine--tRNA ligase.